The following is a 710-amino-acid chain: Early transcription factor 82 kDa subunit (710 aa).

It belongs to the poxviridae VETF large subunit family. As to quaternary structure, heterodimer of a 70 kDa and a 82 kDa subunit. Part of the early transcription complex composed of ETF, RAP94/OPG109, and the DNA-directed RNA polymerase.

It is found in the virion. Acts with RNA polymerase to initiate transcription from early gene promoters. Is recruited by the RPO-associated protein of 94 kDa RAP94/OPG109 to form the early transcription complex, which also contains the core RNA polymerase. ETF heterodimer binds to early gene promoters. This chain is Early transcription factor 82 kDa subunit (OPG133), found in Homo sapiens (Human).